Reading from the N-terminus, the 388-residue chain is Processive diacylglycerol beta-glucosyltransferase (388 aa).

It belongs to the glycosyltransferase 28 family. UgtP subfamily.

Its subcellular location is the cell membrane. It catalyses the reaction a 1,2-diacyl-3-O-(beta-D-glucopyranosyl)-sn-glycerol + UDP-alpha-D-glucose = a 1,2-diacyl-3-O-(beta-D-Glc-(1-&gt;6)-beta-D-Glc)-sn-glycerol + UDP + H(+). The enzyme catalyses a 1,2-diacyl-3-O-(beta-D-Glc-(1-&gt;6)-beta-D-Glc)-sn-glycerol + UDP-alpha-D-glucose = a 1,2-diacyl-3-O-(beta-D-Glc-(1-&gt;6)-beta-D-Glc-(1-&gt;6)-beta-D-Glc)-sn-glycerol + UDP + H(+). It carries out the reaction a 1,2-diacyl-sn-glycerol + UDP-alpha-D-glucose = a 1,2-diacyl-3-O-(beta-D-glucopyranosyl)-sn-glycerol + UDP + H(+). Its pathway is glycolipid metabolism; diglucosyl-diacylglycerol biosynthesis. In terms of biological role, processive glucosyltransferase involved in the biosynthesis of both the bilayer- and non-bilayer-forming membrane glucolipids. Is able to successively transfer up to three glucosyl residues to diacylglycerol (DAG), thereby catalyzing the formation of beta-monoglucosyl-DAG (3-O-(beta-D-glucopyranosyl)-1,2-diacyl-sn-glycerol), beta-diglucosyl-DAG (3-O-(beta-D-glucopyranosyl-beta-(1-&gt;6)-D-glucopyranosyl)-1,2-diacyl-sn-glycerol) and beta-triglucosyl-DAG (3-O-(beta-D-glucopyranosyl-beta-(1-&gt;6)-D-glucopyranosyl-beta-(1-&gt;6)-D-glucopyranosyl)-1,2-diacyl-sn-glycerol). Beta-diglucosyl-DAG is the predominant glycolipid found in Bacillales and is also used as a membrane anchor for lipoteichoic acid (LTA). The chain is Processive diacylglycerol beta-glucosyltransferase from Bacillus cereus (strain ZK / E33L).